Here is a 931-residue protein sequence, read N- to C-terminus: GPI ethanolamine phosphate transferase 1 (931 aa).

Methionine 1 is a topological domain (cytoplasmic). Residues 2–22 (LLFFALGLLIHFVFFASIFDI) traverse the membrane as a helical segment. Topologically, residues 23–442 (YFTSPLVHGM…SYYHTYDRLF (420 aa)) are lumenal. 4 N-linked (GlcNAc...) asparagine glycosylation sites follow: asparagine 128, asparagine 192, asparagine 295, and asparagine 350. Residues 443–463 (LGINVAVGFVGWMSYTSLLII) traverse the membrane as a helical segment. At 464–480 (KSHSNIPKGTRKEGKKP) the chain is on the cytoplasmic side. The helical transmembrane segment at 481-501 (HCLLLYSFIATGVLVACFLMI) threads the bilayer. A topological domain (lumenal) is located at residue glutamine 502. Residues 503 to 523 (ACPWTYYVYCLLPVPIWYAVL) form a helical membrane-spanning segment. Residues 524–543 (REHEVIQDLVESLLTFPRSH) lie on the Cytoplasmic side of the membrane. Residues 544 to 564 (FVAYLLVFTLGIEVLVLSFFY) form a helical membrane-spanning segment. Position 565 (arginine 565) is a topological domain, lumenal. A helical transmembrane segment spans residues 566 to 586 (YMLTAGLIVFAGWPFLTQLWT). At 587 to 591 (RAKIT) the chain is on the cytoplasmic side. Residues 592–612 (FLSWAFFSLLLAVFPLMPVVG) traverse the membrane as a helical segment. Over 613–618 (RKPNLS) the chain is Lumenal. Asparagine 616 is a glycosylation site (N-linked (GlcNAc...) asparagine). A helical transmembrane segment spans residues 619–639 (LVMGAGFLVLLLSLAVVTTLG). Residues 640 to 649 (KRNIKLVKGE) lie on the Cytoplasmic side of the membrane. A helical membrane pass occupies residues 650–670 (LLVLLLQMLSTVLSMYVVYST). Residues 671 to 685 (HHSLLKKEGLPLMNQ) lie on the Lumenal side of the membrane. A helical transmembrane segment spans residues 686 to 706 (IVSWATLASSLVAPLLSSTAL). The Cytoplasmic portion of the chain corresponds to 707–723 (SQRLASILLSLMSTYLL). Residues 724-744 (LSTGYEALFPLVLSCLMFVWI) traverse the membrane as a helical segment. At 745–786 (QVEQETLQQPGVSCKQKLTSIQFTCDTDIAQFRQLCPDDIRR) the chain is on the lumenal side. Residues 787 to 807 (AFFLVFFLLTAFFGTGNIASI) form a helical membrane-spanning segment. Residues 808-824 (NSFDLASVYCFLTVFSP) lie on the Cytoplasmic side of the membrane. A helical transmembrane segment spans residues 825–845 (FMMGALMMWKILIPFVLVMCA). At 846–858 (FEAVQITTQLSSK) the chain is on the lumenal side. Residues 859–879 (GLFLVVLIISDIMALHFFFLV) form a helical membrane-spanning segment. Residues 880 to 894 (KDSGSWLDIGTSISH) lie on the Cytoplasmic side of the membrane. The chain crosses the membrane as a helical span at residues 895–915 (YVIVMSMTIFLVFLNGLAQLL). The Lumenal segment spans residues 916–931 (TTKKLQLCGKPKSHLM).

Belongs to the PIGG/PIGN/PIGO family. PIGN subfamily.

Its subcellular location is the endoplasmic reticulum membrane. It functions in the pathway glycolipid biosynthesis; glycosylphosphatidylinositol-anchor biosynthesis. In terms of biological role, ethanolamine phosphate transferase that catalyzes an ethanolamine phosphate (EtNP) transfer from phosphatidylethanolamine (PE) to the 2-OH position of the first alpha-1,4-linked mannose of the alpha-D-Man-(1-&gt;6)-alpha-D-Man-(1-&gt;4)-alpha-D-GlcN-(1-&gt;6)-(1-radyl,2-acyl-sn-glycero-3-phospho)-2-acyl-inositol (also termed H3) intermediate to generate an alpha-D-Man-(1-&gt;6)-2-PEtn-alpha-D-Man-(1-&gt;4)-alpha-D-GlcN-(1-&gt;6)-(1-radyl,2-acyl-sn-glycero-3-phospho)-2-acyl-inositol and participates in the eighth step of the glycosylphosphatidylinositol-anchor biosynthesis. May act as suppressor of replication stress and chromosome missegregation. The protein is GPI ethanolamine phosphate transferase 1 of Mus musculus (Mouse).